Reading from the N-terminus, the 1515-residue chain is Adhesion G protein-coupled receptor L1 (1515 aa).

An N-terminal signal peptide occupies residues 1 to 24 (MARLAAALWSLCVTTVLVTSATQG). Topologically, residues 25–857 (LSRAGLPFGL…EIYQGRINEL (833 aa)) are extracellular. Residues 40–129 (ACEGYPIELR…KYLEVQYDCV (90 aa)) enclose the SUEL-type lectin domain. 5 cysteine pairs are disulfide-bonded: cysteine 41-cysteine 71, cysteine 50-cysteine 128, cysteine 83-cysteine 115, cysteine 96-cysteine 102, and cysteine 140-cysteine 322. Glutamate 42 is an alpha-L-rhamnose binding site. Asparagine 98 carries N-linked (GlcNAc...) asparagine glycosylation. Residue 117–120 (GTYK) participates in alpha-L-rhamnose binding. Positions 139–398 (VCPGTLQKVL…VVRYSLEFGP (260 aa)) constitute an Olfactomedin-like domain. A disordered region spans residues 400 to 468 (DPSAGPATSP…APAPSTRRPP (69 aa)). Over residues 405-441 (PATSPPLSTTTTARPTPLTSTASPAATTPLRRAPLTT) the composition is skewed to low complexity. Residues 453 to 468 (DLPPATAPAPSTRRPP) show a composition bias toward pro residues. 2 cysteine pairs are disulfide-bonded: cysteine 480-cysteine 515 and cysteine 503-cysteine 532. N-linked (GlcNAc...) asparagine glycosylation is found at asparagine 531, asparagine 640, asparagine 741, asparagine 800, asparagine 805, and asparagine 826. Residues 669–850 (PARFLAAKQN…AVLMAHREIY (182 aa)) enclose the GAIN-B domain. 2 disulfides stabilise this stretch: cysteine 801-cysteine 832 and cysteine 820-cysteine 834. The GPS stretch occupies residues 801–850 (CSFWNYSERSMLGYWSTQGCRLVESNKTHTTCACSHLTNFAVLMAHREIY). The helical transmembrane segment at 858-878 (LLSVITWVGIVISLVCLAICI) threads the bilayer. The Cytoplasmic portion of the chain corresponds to 879–892 (STFCFLRGLQTDRN). The helical transmembrane segment at 893–913 (TIHKNLCINLFLAELLFLVGI) threads the bilayer. The Extracellular segment spans residues 914-919 (DKTQYE). The helical transmembrane segment at 920-940 (VACPIFAGLLHYFFLAAFSWL) threads the bilayer. At 941 to 964 (CLEGVHLYLLLVEVFESEYSRTKY) the chain is on the cytoplasmic side. The chain crosses the membrane as a helical span at residues 965-985 (YYLGGYCFPALVVGIAAAIDY). Over 986–1001 (RSYGTEKACWLRVDNY) the chain is Extracellular. Residues 1002–1022 (FIWSFIGPVSFVIVVNLVFLM) form a helical membrane-spanning segment. Topologically, residues 1023–1049 (VTLHKMIRSSSVLKPDSSRLDNIKSWA) are cytoplasmic. Residues 1050–1070 (LGAIALLFLLGLTWAFGLLFI) form a helical membrane-spanning segment. Over 1071-1074 (NKES) the chain is Extracellular. Residues 1075–1095 (VVMAYLFTTFNAFQGVFIFVF) form a helical membrane-spanning segment. Residues 1096–1515 (HCALQKKVHK…DGQMQLVTSL (420 aa)) lie on the Cytoplasmic side of the membrane. Residues 1144-1184 (TQVPGQGRHIHQVSLGPRGRSALPESQKDPGGQSGPGDPLT) are disordered. Residue arginine 1237 is modified to Omega-N-methylarginine. Serine 1263 bears the Phosphoserine mark. Disordered stretches follow at residues 1291–1316 (FNNSYSLRSGDFPPGDGGPEPPRGRN), 1337–1369 (RGASGGAKGPPPEPPVPPVPGVSEDEAGGPGGA), 1401–1470 (ESES…SRPP), and 1492–1515 (YLAAPSLEGPGPDGDGQMQLVTSL). 2 stretches are compositionally biased toward pro residues: residues 1345–1356 (GPPPEPPVPPVP) and 1449–1461 (ALPPPPPAPPGPP). A phosphoserine mark is found at serine 1497 and serine 1514.

This sequence belongs to the G-protein coupled receptor 2 family. Adhesion G-protein coupled receptor (ADGR) subfamily. In terms of assembly, forms a heterodimer, consisting of a large extracellular region (p120) non-covalently linked to a seven-transmembrane moiety (p85). Interacts with syntaxin and with proteins of the SHANK family via the PDZ domain. Isoform 2 interacts with TENM2. Interacts (via extracellular domain) with FLRT1, FLRT2 and FLRT3 (via extracellular domain). Post-translationally, autoproteolytically cleaved into 2 subunits, an extracellular subunit and a seven-transmembrane subunit. This proteolytic processing takes place early in the biosynthetic pathway, either in the endoplasmic reticulum or in the early compartment of the Golgi apparatus. In terms of tissue distribution, expressed in the brain (at protein level). Brain specific distribution but low levels are also detected in most tissues.

The protein resides in the cell membrane. It is found in the cell projection. It localises to the axon. Its subcellular location is the growth cone. The protein localises to the synapse. The protein resides in the presynaptic cell membrane. It is found in the synaptosome. Its function is as follows. Calcium-independent receptor of high affinity for alpha-latrotoxin, an excitatory neurotoxin present in black widow spider venom which triggers massive exocytosis from neurons and neuroendocrine cells. Receptor probably implicated in the regulation of exocytosis. Receptor for TENM2 that mediates heterophilic synaptic cell-cell contact and postsynaptic specialization. This chain is Adhesion G protein-coupled receptor L1, found in Rattus norvegicus (Rat).